The sequence spans 131 residues: D-ribose pyranase (131 aa).

Histidine 20 acts as the Proton donor in catalysis. Residues aspartate 28, histidine 98, and tyrosine 120–asparagine 122 contribute to the substrate site.

This sequence belongs to the RbsD / FucU family. RbsD subfamily. In terms of assembly, homodecamer.

The protein resides in the cytoplasm. It carries out the reaction beta-D-ribopyranose = beta-D-ribofuranose. Its pathway is carbohydrate metabolism; D-ribose degradation; D-ribose 5-phosphate from beta-D-ribopyranose: step 1/2. Catalyzes the interconversion of beta-pyran and beta-furan forms of D-ribose. This Coprothermobacter proteolyticus (strain ATCC 35245 / DSM 5265 / OCM 4 / BT) protein is D-ribose pyranase.